Consider the following 311-residue polypeptide: Ribonuclease HIII (311 aa).

The 217-residue stretch at 95 to 311 folds into the RNase H type-2 domain; that stretch reads MSIVGSDEVG…NTEKALRLLR (217 aa). Asp101, Glu102, and Asp206 together coordinate a divalent metal cation.

This sequence belongs to the RNase HII family. RnhC subfamily. The cofactor is Mn(2+). Mg(2+) is required as a cofactor.

The protein resides in the cytoplasm. The catalysed reaction is Endonucleolytic cleavage to 5'-phosphomonoester.. Its function is as follows. Endonuclease that specifically degrades the RNA of RNA-DNA hybrids. The polypeptide is Ribonuclease HIII (Bacillus cereus (strain ATCC 14579 / DSM 31 / CCUG 7414 / JCM 2152 / NBRC 15305 / NCIMB 9373 / NCTC 2599 / NRRL B-3711)).